The chain runs to 380 residues: MSDSSAPDLPSKPSSLNAGQSSSLQTTNTGIGMGSGMGSGMGMGTYGNSYGSSYGGGYGSSMYGSGGYGMGGYGSSMYGGSRYGMGSYGMGGYGMGGYGMGMNTGMNGMGMAGSLAQGSEATFQLIESIIGAVGGFAQVLEATYMATHSSFFTMISMADQLSHLKTALGSMLGIYTVINWLKRIMGKLMGVKNKLTPDEFRKFQEKQMKKLSNSNNTGGPNKNTNKLSLKPLLLFLAAVVGFPYLLKKLIAHLAETSQMNGNFITSGGSLQGNLDPTKLEFARALYDFNPENEEMELKLARGELMAILSKTEPNSNQESTWWKCRSRDGKVGFVPYNYVEIIERHQRPVPEAQEEPAAAVLAERQQQPIIDSTEFQKMKT.

Residues 1 to 30 are disordered; that stretch reads MSDSSAPDLPSKPSSLNAGQSSSLQTTNTG. Topologically, residues 1-230 are lumenal; it reads MSDSSAPDLP…NKNTNKLSLK (230 aa). Positions 12–30 are enriched in polar residues; it reads KPSSLNAGQSSSLQTTNTG. Residues 231–251 form a helical membrane-spanning segment; it reads PLLLFLAAVVGFPYLLKKLIA. At 252–380 the chain is on the cytoplasmic side; the sequence is HLAETSQMNG…DSTEFQKMKT (129 aa). One can recognise an SH3 domain in the interval 277-344; that stretch reads TKLEFARALY…PYNYVEIIER (68 aa).

It belongs to the peroxin-13 family. In terms of assembly, interacts (via SH3 domain) with PEX14 (via SH3-binding motif); forming the PEX13-PEX14 docking complex.

Its subcellular location is the peroxisome membrane. Component of the PEX13-PEX14 docking complex, a translocon channel that specifically mediates the import of peroxisomal cargo proteins bound to PEX5 receptor. The PEX13-PEX14 docking complex forms a large import pore which can be opened to a diameter of about 9 nm. Mechanistically, PEX5 receptor along with cargo proteins associates with the PEX14 subunit of the PEX13-PEX14 docking complex in the cytosol, leading to the insertion of the receptor into the organelle membrane with the concomitant translocation of the cargo into the peroxisome matrix. The protein is Peroxisomal membrane protein PEX13 (PEX13) of Komagataella pastoris (Yeast).